The chain runs to 401 residues: Cysteine desulfurase CsdA (401 aa).

Lysine 222 bears the N6-(pyridoxal phosphate)lysine mark. Catalysis depends on cysteine 358, which acts as the Cysteine persulfide intermediate.

Belongs to the class-V pyridoxal-phosphate-dependent aminotransferase family. Csd subfamily. In terms of assembly, homodimer. Forms a heterodimer with CsdE. It depends on pyridoxal 5'-phosphate as a cofactor.

It catalyses the reaction (sulfur carrier)-H + L-cysteine = (sulfur carrier)-SH + L-alanine. It carries out the reaction L-selenocysteine + AH2 = hydrogenselenide + L-alanine + A + H(+). The enzyme catalyses 3-sulfino-L-alanine + H2O = sulfite + L-alanine + H(+). Its activity is regulated as follows. Cysteine desulfurase activity is increased 2-fold in the presence of CsdE. In terms of biological role, catalyzes the removal of elemental sulfur and selenium atoms from L-cysteine, L-cystine, L-selenocysteine, and L-selenocystine to produce L-alanine, and transiently retains the released sulfur atom on a cysteine residue, in the form of a persulfide. Can also desulfinate L-cysteine sulfinate (3-sulfino-L-alanine), which is the best substrate of the enzyme. Functions as a selenium delivery protein in the pathway for the biosynthesis of selenophosphate. Seems to participate in Fe/S biogenesis by recruiting the SufBCD-SufE proteins. Transfers sulfur to CsdE that increases the cysteine desulfurase activity of CsdA. Can also transfer sulfur directly to TcdA/CsdL in vitro. Appears to support the function of TcdA in the generation of cyclic threonylcarbamoyladenosine at position 37 (ct(6)A37) in tRNAs that read codons beginning with adenine. This chain is Cysteine desulfurase CsdA (csdA), found in Escherichia coli (strain K12).